The chain runs to 347 residues: tRNA N6-adenosine threonylcarbamoyltransferase (347 aa).

Residues H115 and H119 each coordinate Fe cation. Residues 138 to 142, D171, G184, and N277 contribute to the substrate site; that span reads LVSGG. Position 305 (D305) interacts with Fe cation.

It belongs to the KAE1 / TsaD family. Fe(2+) is required as a cofactor.

The protein resides in the cytoplasm. It catalyses the reaction L-threonylcarbamoyladenylate + adenosine(37) in tRNA = N(6)-L-threonylcarbamoyladenosine(37) in tRNA + AMP + H(+). In terms of biological role, required for the formation of a threonylcarbamoyl group on adenosine at position 37 (t(6)A37) in tRNAs that read codons beginning with adenine. Is involved in the transfer of the threonylcarbamoyl moiety of threonylcarbamoyl-AMP (TC-AMP) to the N6 group of A37, together with TsaE and TsaB. TsaD likely plays a direct catalytic role in this reaction. This Polaromonas sp. (strain JS666 / ATCC BAA-500) protein is tRNA N6-adenosine threonylcarbamoyltransferase.